We begin with the raw amino-acid sequence, 115 residues long: Phosphoribosyl-AMP cyclohydrolase (115 aa).

Mg(2+) is bound at residue Asp80. Residue Cys81 coordinates Zn(2+). Residues Asp82 and Asp84 each contribute to the Mg(2+) site. Positions 97 and 104 each coordinate Zn(2+).

The protein belongs to the PRA-CH family. As to quaternary structure, homodimer. Mg(2+) is required as a cofactor. It depends on Zn(2+) as a cofactor.

The protein localises to the cytoplasm. It catalyses the reaction 1-(5-phospho-beta-D-ribosyl)-5'-AMP + H2O = 1-(5-phospho-beta-D-ribosyl)-5-[(5-phospho-beta-D-ribosylamino)methylideneamino]imidazole-4-carboxamide. The protein operates within amino-acid biosynthesis; L-histidine biosynthesis; L-histidine from 5-phospho-alpha-D-ribose 1-diphosphate: step 3/9. Its function is as follows. Catalyzes the hydrolysis of the adenine ring of phosphoribosyl-AMP. This Mycobacterium leprae (strain Br4923) protein is Phosphoribosyl-AMP cyclohydrolase.